The sequence spans 304 residues: MATH domain and coiled-coil domain-containing protein At2g42470 (304 aa).

An MATH domain is found at 6–123 (QTSFTFEIDN…NNKLIIEVQV (118 aa)). Residues 219 to 292 (FKVDWLKKKL…LKIELDRTRR (74 aa)) are a coiled coil.

In Arabidopsis thaliana (Mouse-ear cress), this protein is MATH domain and coiled-coil domain-containing protein At2g42470.